The primary structure comprises 455 residues: L-serine dehydratase (455 aa).

The protein belongs to the iron-sulfur dependent L-serine dehydratase family. The cofactor is [4Fe-4S] cluster.

It carries out the reaction L-serine = pyruvate + NH4(+). It participates in carbohydrate biosynthesis; gluconeogenesis. This chain is L-serine dehydratase (sdaA), found in Streptomyces coelicolor (strain ATCC BAA-471 / A3(2) / M145).